Reading from the N-terminus, the 329-residue chain is Acetyl-coenzyme A carboxylase carboxyl transferase subunit alpha (329 aa).

The region spanning 40–294 is the CoA carboxyltransferase C-terminal domain; it reads QLETLAARRR…REALERNLSE (255 aa).

Belongs to the AccA family. Acetyl-CoA carboxylase is a heterohexamer composed of biotin carboxyl carrier protein (AccB), biotin carboxylase (AccC) and two subunits each of ACCase subunit alpha (AccA) and ACCase subunit beta (AccD).

Its subcellular location is the cytoplasm. The enzyme catalyses N(6)-carboxybiotinyl-L-lysyl-[protein] + acetyl-CoA = N(6)-biotinyl-L-lysyl-[protein] + malonyl-CoA. It functions in the pathway lipid metabolism; malonyl-CoA biosynthesis; malonyl-CoA from acetyl-CoA: step 1/1. Component of the acetyl coenzyme A carboxylase (ACC) complex. First, biotin carboxylase catalyzes the carboxylation of biotin on its carrier protein (BCCP) and then the CO(2) group is transferred by the carboxyltransferase to acetyl-CoA to form malonyl-CoA. The chain is Acetyl-coenzyme A carboxylase carboxyl transferase subunit alpha from Synechococcus sp. (strain CC9311).